Consider the following 114-residue polypeptide: Non-specific lipid-transfer protein 2 (114 aa).

The first 23 residues, 1–23 (MEMVNKIACFVLLCMVVVAPHAE), serve as a signal peptide directing secretion. Disulfide bonds link C27-C73, C37-C50, C51-C96, and C71-C110.

The protein belongs to the plant LTP family.

Functionally, plant non-specific lipid-transfer proteins transfer phospholipids as well as galactolipids across membranes. May play a role in wax or cutin deposition in the cell walls of expanding epidermal cells and certain secretory tissues. The sequence is that of Non-specific lipid-transfer protein 2 (LTP2) from Solanum pennellii (Tomato).